Consider the following 953-residue polypeptide: Pyruvate, phosphate dikinase, chloroplastic (953 aa).

Residues 1–77 (MMSSLSVEGM…VLNPVSPPVT (77 aa)) constitute a chloroplast transit peptide. The interval 55–74 (PELRSSGLTPPRAVLNPVSP) is disordered. Thr533 is subject to Phosphothreonine; by PDRP1. Residue His535 is the Tele-phosphohistidine intermediate of the active site. The substrate site is built by Arg641, Arg698, Glu827, Gly848, Thr849, Asn850, and Asp851. Glu827 is a binding site for Mg(2+). Residue Asp851 participates in Mg(2+) binding. Cys913 (proton donor) is an active-site residue.

It belongs to the PEP-utilizing enzyme family. Homotetramer. Mg(2+) is required as a cofactor. Phosphorylation of Thr-533 in the dark inactivates the enzyme. Dephosphorylation upon light stimulation reactivates the enzyme.

It localises to the plastid. It is found in the chloroplast. It catalyses the reaction pyruvate + phosphate + ATP = phosphoenolpyruvate + AMP + diphosphate + H(+). The protein operates within photosynthesis; C4 acid pathway. With respect to regulation, activated by light-induced dephosphorylation. Inhibited by dark-induced phosphorylation. Both reactions are catalyzed by PDRP1. Inactivated by cold due to the dissociation of the homotetramer. In terms of biological role, formation of phosphoenolpyruvate, which is the primary acceptor of CO(2) in C4 and some Crassulacean acid metabolism plants. In Flaveria bidentis (Coastal plain yellowtops), this protein is Pyruvate, phosphate dikinase, chloroplastic.